A 298-amino-acid chain; its full sequence is Ribosomal RNA processing protein 36 homolog (298 aa).

The disordered stretch occupies residues 1-131 (MKPDIIKKRR…SDAPVEMTAM (131 aa)). Residues 14–56 (SDDEDEYNEEDEMYEDDNNNYEEDEDDDDDDDEDDEDDDENEE) are compositionally biased toward acidic residues. Polar residues-rich tracts occupy residues 61-70 (QQLSNVSFSS) and 83-92 (LNLNTITKNL). Coiled coils occupy residues 88 to 112 (ITKN…MNSK) and 196 to 228 (RERD…KNKL). The segment covering 98–111 (FKKEEQQEKEEMNS) has biased composition (basic and acidic residues). The interval 279–298 (ISSKEKTFLPQRRSFDQDEN) is disordered.

Belongs to the RRP36 family.

It is found in the nucleus. Its subcellular location is the nucleolus. In terms of biological role, involved in the early processing steps of the pre-rRNA in the maturation pathway leading to the 18S rRNA. This chain is Ribosomal RNA processing protein 36 homolog, found in Dictyostelium discoideum (Social amoeba).